Consider the following 151-residue polypeptide: Probable desiccation-related protein LEA14 (151 aa).

This sequence belongs to the LEA type 2 family.

This is Probable desiccation-related protein LEA14 (LEA14) from Arabidopsis thaliana (Mouse-ear cress).